The following is a 210-amino-acid chain: LexA repressor (210 aa).

Positions Phe-28–Gly-48 form a DNA-binding region, H-T-H motif. Residues Ser-131 and Lys-169 each act as for autocatalytic cleavage activity in the active site.

It belongs to the peptidase S24 family. Homodimer.

The catalysed reaction is Hydrolysis of Ala-|-Gly bond in repressor LexA.. Functionally, represses a number of genes involved in the response to DNA damage (SOS response), including recA and lexA. In the presence of single-stranded DNA, RecA interacts with LexA causing an autocatalytic cleavage which disrupts the DNA-binding part of LexA, leading to derepression of the SOS regulon and eventually DNA repair. This is LexA repressor from Koribacter versatilis (strain Ellin345).